Consider the following 403-residue polypeptide: Metacaspase-7 (403 aa).

Catalysis depends on residues histidine 86 and cysteine 139. Cysteine 139 carries the S-nitrosocysteine modification.

This sequence belongs to the peptidase C14B family. Proteolytically processed; by an autocatalytic mechanism. As to expression, expressed in roots, flowers and siliques.

This is Metacaspase-7 (AMC7) from Arabidopsis thaliana (Mouse-ear cress).